The chain runs to 100 residues: NADH-quinone oxidoreductase subunit K (100 aa).

3 helical membrane-spanning segments follow: residues 4-24 (LQHG…GLVI), 28-48 (LLFM…AFVV), and 60-80 (VMYI…LALL).

The protein belongs to the complex I subunit 4L family. As to quaternary structure, NDH-1 is composed of 13 different subunits. Subunits NuoA, H, J, K, L, M, N constitute the membrane sector of the complex.

The protein resides in the cell inner membrane. It catalyses the reaction a quinone + NADH + 5 H(+)(in) = a quinol + NAD(+) + 4 H(+)(out). Its function is as follows. NDH-1 shuttles electrons from NADH, via FMN and iron-sulfur (Fe-S) centers, to quinones in the respiratory chain. The immediate electron acceptor for the enzyme in this species is believed to be ubiquinone. Couples the redox reaction to proton translocation (for every two electrons transferred, four hydrogen ions are translocated across the cytoplasmic membrane), and thus conserves the redox energy in a proton gradient. The chain is NADH-quinone oxidoreductase subunit K from Shigella boydii serotype 18 (strain CDC 3083-94 / BS512).